Here is a 468-residue protein sequence, read N- to C-terminus: Glutamine synthetase (468 aa).

A GS beta-grasp domain is found at 13 to 97 (NEVKFVDLRF…IRCDILEPAT (85 aa)). Residues 105-468 (PRSIAKRAED…PVEFELYYSV (364 aa)) form the GS catalytic domain. Residues E130 and E132 each coordinate Mg(2+). Residue E208 coordinates ATP. 2 residues coordinate Mg(2+): E213 and E220. Residues 264–265 (NG) and G265 each bind L-glutamate. Position 269 (H269) interacts with Mg(2+). ATP contacts are provided by residues 271–273 (HQS) and S273. L-glutamate contacts are provided by R321, E327, and R339. ATP is bound by residues R339, R344, and K352. Position 357 (E357) interacts with Mg(2+). R359 lines the L-glutamate pocket. Y397 is subject to O-AMP-tyrosine.

This sequence belongs to the glutamine synthetase family. As to quaternary structure, oligomer of 12 subunits arranged in the form of two hexameric ring. Mg(2+) serves as cofactor.

The protein localises to the cytoplasm. The enzyme catalyses L-glutamate + NH4(+) + ATP = L-glutamine + ADP + phosphate + H(+). With respect to regulation, the activity of this enzyme could be controlled by adenylation under conditions of abundant glutamine. Its function is as follows. Catalyzes the ATP-dependent biosynthesis of glutamine from glutamate and ammonia. The chain is Glutamine synthetase from Vibrio alginolyticus.